The chain runs to 464 residues: tRNA-2-methylthio-N(6)-dimethylallyladenosine synthase (464 aa).

The disordered stretch occupies residues 1 to 25; it reads MSDLVPLSRKPAPAAGDPAPSPAAP. The MTTase N-terminal domain occupies 27–142; the sequence is RKVYVHTFGC…LPEMVERARG (116 aa). [4Fe-4S] cluster is bound by residues Cys36, Cys72, Cys105, Cys180, Cys184, and Cys187. One can recognise a Radical SAM core domain in the interval 166-398; the sequence is ARGRATAFVT…LAAQRRIAGE (233 aa). The TRAM domain occupies 401–464; the sequence is AAELGKVVEV…GGSSLSGTLA (64 aa).

It belongs to the methylthiotransferase family. MiaB subfamily. As to quaternary structure, monomer. The cofactor is [4Fe-4S] cluster.

It is found in the cytoplasm. The enzyme catalyses N(6)-dimethylallyladenosine(37) in tRNA + (sulfur carrier)-SH + AH2 + 2 S-adenosyl-L-methionine = 2-methylsulfanyl-N(6)-dimethylallyladenosine(37) in tRNA + (sulfur carrier)-H + 5'-deoxyadenosine + L-methionine + A + S-adenosyl-L-homocysteine + 2 H(+). In terms of biological role, catalyzes the methylthiolation of N6-(dimethylallyl)adenosine (i(6)A), leading to the formation of 2-methylthio-N6-(dimethylallyl)adenosine (ms(2)i(6)A) at position 37 in tRNAs that read codons beginning with uridine. The chain is tRNA-2-methylthio-N(6)-dimethylallyladenosine synthase from Anaeromyxobacter dehalogenans (strain 2CP-C).